Reading from the N-terminus, the 761-residue chain is Mitochondrial intermediate peptidase 1 (761 aa).

Histidine 530 contributes to the Zn(2+) binding site. Residue glutamate 531 is part of the active site. Residues histidine 534 and histidine 537 each coordinate Zn(2+).

The protein belongs to the peptidase M3 family. Requires Zn(2+) as cofactor.

It is found in the mitochondrion matrix. The enzyme catalyses Release of an N-terminal octapeptide as second stage of processing of some proteins imported into the mitochondrion.. Cleaves proteins, imported into the mitochondrion, to their mature size. While most mitochondrial precursor proteins are processed to the mature form in one step by mitochondrial processing peptidase (MPP), the sequential cleavage by MIP of an octapeptide after initial processing by MPP is a required step for a subgroup of nuclear-encoded precursor proteins destined for the matrix or the inner membrane. This chain is Mitochondrial intermediate peptidase 1 (OCT1), found in Cryptococcus neoformans var. neoformans serotype D (strain B-3501A) (Filobasidiella neoformans).